Reading from the N-terminus, the 206-residue chain is Ribosomal RNA large subunit methyltransferase E (206 aa).

Positions 63, 65, 83, 99, and 124 each coordinate S-adenosyl-L-methionine. Residue K164 is the Proton acceptor of the active site.

Belongs to the class I-like SAM-binding methyltransferase superfamily. RNA methyltransferase RlmE family.

The protein resides in the cytoplasm. It catalyses the reaction uridine(2552) in 23S rRNA + S-adenosyl-L-methionine = 2'-O-methyluridine(2552) in 23S rRNA + S-adenosyl-L-homocysteine + H(+). Its function is as follows. Specifically methylates the uridine in position 2552 of 23S rRNA at the 2'-O position of the ribose in the fully assembled 50S ribosomal subunit. The protein is Ribosomal RNA large subunit methyltransferase E of Buchnera aphidicola subsp. Acyrthosiphon pisum (strain APS) (Acyrthosiphon pisum symbiotic bacterium).